A 667-amino-acid chain; its full sequence is Tripartite terminase subunit 3 (667 aa).

Residues 208 to 215 (VPRRHGKT) carry the Walker A motif motif. The Walker B motif motif lies at 301–306 (LLIVDE). Catalysis depends on glutamate 306, which acts as the For ATPase activity. Catalysis depends on for nuclease activity residues aspartate 459, glutamate 530, and aspartate 644.

It belongs to the herpesviridae TRM3 protein family. Interacts with the terminase subunits TRM1 and TRM2. Interacts with portal protein.

It localises to the host nucleus. Functionally, component of the molecular motor that translocates viral genomic DNA in empty capsid during DNA packaging. Forms a tripartite terminase complex together with TRM1 and TRM2 in the host cytoplasm. Once the complex reaches the host nucleus, it interacts with the capsid portal vertex. This portal forms a ring in which genomic DNA is translocated into the capsid. TRM3 carries an RNase H-like nuclease activity that plays an important role for the cleavage of concatemeric viral DNA into unit length genomes. This Human herpesvirus 6A (strain Uganda-1102) (HHV-6 variant A) protein is Tripartite terminase subunit 3.